The sequence spans 231 residues: Deoxyribose-phosphate aldolase (231 aa).

Aspartate 97 (proton donor/acceptor) is an active-site residue. Catalysis depends on lysine 162, which acts as the Schiff-base intermediate with acetaldehyde. The Proton donor/acceptor role is filled by lysine 191.

Belongs to the DeoC/FbaB aldolase family. DeoC type 1 subfamily.

It localises to the cytoplasm. The enzyme catalyses 2-deoxy-D-ribose 5-phosphate = D-glyceraldehyde 3-phosphate + acetaldehyde. The protein operates within carbohydrate degradation; 2-deoxy-D-ribose 1-phosphate degradation; D-glyceraldehyde 3-phosphate and acetaldehyde from 2-deoxy-alpha-D-ribose 1-phosphate: step 2/2. Functionally, catalyzes a reversible aldol reaction between acetaldehyde and D-glyceraldehyde 3-phosphate to generate 2-deoxy-D-ribose 5-phosphate. This Caldanaerobacter subterraneus subsp. tengcongensis (strain DSM 15242 / JCM 11007 / NBRC 100824 / MB4) (Thermoanaerobacter tengcongensis) protein is Deoxyribose-phosphate aldolase.